The chain runs to 394 residues: Alanine--glyoxylate aminotransferase (394 aa).

Residues 76 to 78, Ser153, and Gln204 each bind pyridoxal 5'-phosphate; that span reads AGH. Substrate is bound at residue Ser153. An N6-(pyridoxal phosphate)lysine modification is found at Lys205. Positions 256 and 259 each coordinate pyridoxal 5'-phosphate. Position 356 (Arg356) interacts with substrate.

The protein belongs to the class-V pyridoxal-phosphate-dependent aminotransferase family. Homodimer. The cofactor is pyridoxal 5'-phosphate.

It is found in the peroxisome. The enzyme catalyses glyoxylate + L-alanine = glycine + pyruvate. It carries out the reaction (2S)-2-aminobutanoate + glyoxylate = 2-oxobutanoate + glycine. The catalysed reaction is glyoxylate + L-phenylalanine = 3-phenylpyruvate + glycine. It catalyses the reaction glyoxylate + L-serine = 3-hydroxypyruvate + glycine. The enzyme catalyses 2-oxobutanoate + L-alanine = (2S)-2-aminobutanoate + pyruvate. It carries out the reaction L-phenylalanine + pyruvate = 3-phenylpyruvate + L-alanine. The catalysed reaction is L-serine + pyruvate = 3-hydroxypyruvate + L-alanine. Its function is as follows. Catalyzes the pyridoxal 5'-phosphate-dependent transamination of alanine with glyoxylate as an amino group acceptor. Can also catalyze, although with much less efficiency, the transamination of amino-butyrate, phenylalanine and serine with glyoxylate or pyruvate as an amino group acceptor. Does not catalyze the transamination of both 3-hydroxykynurenine and L-kynurenine. May play a role in the detoxification of glyoxylate, a toxic plant metabolite from the fly diet. This chain is Alanine--glyoxylate aminotransferase, found in Drosophila melanogaster (Fruit fly).